The sequence spans 345 residues: GTP cyclohydrolase-2 (345 aa).

Positions 1–27 (MTIDNYDNSKQDSSKYEVSGTGDGRNG) are disordered. A GTP-binding site is contributed by 143–147 (RIHSE). Cysteine 148, cysteine 159, and cysteine 161 together coordinate Zn(2+). GTP contacts are provided by residues glutamine 164, 197–199 (EGR), and threonine 219. The active-site Proton acceptor is the aspartate 231. Arginine 233 acts as the Nucleophile in catalysis. Residues threonine 254 and lysine 259 each contribute to the GTP site. Positions 312–345 (PLKLHTNPQPTETSEAQNQNRMNSALSSTSTLAI) are disordered. Over residues 317 to 345 (TNPQPTETSEAQNQNRMNSALSSTSTLAI) the composition is skewed to polar residues.

This sequence belongs to the GTP cyclohydrolase II family. Requires Zn(2+) as cofactor.

It carries out the reaction GTP + 4 H2O = 2,5-diamino-6-hydroxy-4-(5-phosphoribosylamino)-pyrimidine + formate + 2 phosphate + 3 H(+). It functions in the pathway cofactor biosynthesis; riboflavin biosynthesis; 5-amino-6-(D-ribitylamino)uracil from GTP: step 1/4. Functionally, catalyzes the conversion of GTP to 2,5-diamino-6-ribosylamino-4(3H)-pyrimidinone 5'-phosphate (DARP), formate and pyrophosphate. The sequence is that of GTP cyclohydrolase-2 (RIB1) from Saccharomyces cerevisiae (strain ATCC 204508 / S288c) (Baker's yeast).